Reading from the N-terminus, the 194-residue chain is Probable GTP-binding protein EngB (194 aa).

Residues Leu23 to Val194 form the EngB-type G domain. Residues Gly31–Ser38, Gly57–Ser61, Asp75–Gly78, Thr143–Asp146, and Tyr173–Ala175 each bind GTP. The Mg(2+) site is built by Ser38 and Thr59.

It belongs to the TRAFAC class TrmE-Era-EngA-EngB-Septin-like GTPase superfamily. EngB GTPase family. The cofactor is Mg(2+).

Functionally, necessary for normal cell division and for the maintenance of normal septation. The chain is Probable GTP-binding protein EngB from Thermosipho africanus (strain TCF52B).